The chain runs to 230 residues: Probable methylthioribulose-1-phosphate dehydratase (230 aa).

Residue C87 coordinates substrate. Residues H105 and H107 each contribute to the Zn(2+) site. The Proton donor/acceptor role is filled by E129. H185 serves as a coordination point for Zn(2+).

The protein belongs to the aldolase class II family. MtnB subfamily. It depends on Zn(2+) as a cofactor.

It localises to the cytoplasm. It carries out the reaction 5-(methylsulfanyl)-D-ribulose 1-phosphate = 5-methylsulfanyl-2,3-dioxopentyl phosphate + H2O. The protein operates within amino-acid biosynthesis; L-methionine biosynthesis via salvage pathway; L-methionine from S-methyl-5-thio-alpha-D-ribose 1-phosphate: step 2/6. Catalyzes the dehydration of methylthioribulose-1-phosphate (MTRu-1-P) into 2,3-diketo-5-methylthiopentyl-1-phosphate (DK-MTP-1-P). The protein is Probable methylthioribulose-1-phosphate dehydratase of Drosophila virilis (Fruit fly).